The sequence spans 247 residues: 3-deoxy-manno-octulosonate cytidylyltransferase (247 aa).

Belongs to the KdsB family.

It is found in the cytoplasm. It carries out the reaction 3-deoxy-alpha-D-manno-oct-2-ulosonate + CTP = CMP-3-deoxy-beta-D-manno-octulosonate + diphosphate. It participates in nucleotide-sugar biosynthesis; CMP-3-deoxy-D-manno-octulosonate biosynthesis; CMP-3-deoxy-D-manno-octulosonate from 3-deoxy-D-manno-octulosonate and CTP: step 1/1. It functions in the pathway bacterial outer membrane biogenesis; lipopolysaccharide biosynthesis. In terms of biological role, activates KDO (a required 8-carbon sugar) for incorporation into bacterial lipopolysaccharide in Gram-negative bacteria. The polypeptide is 3-deoxy-manno-octulosonate cytidylyltransferase (Rhodopseudomonas palustris (strain BisA53)).